We begin with the raw amino-acid sequence, 195 residues long: Protein M2-1 (195 aa).

The segment at 1–28 adopts a C3H1-type zinc-finger fold; sequence MSRRNPCKFEIRGHCLNGRRCHYSHNYF. Residues 32–49 are oligomerization; sequence PHALLVRQNFMLNKILKS. Phosphoserine; by host is present on residues Ser58 and Ser61. Residues 76-171 form a globular core region; that stretch reads IVGVLESYIG…KNTLDIHKSI (96 aa). The tract at residues 126–163 is binding to the phosphoprotein; it reads RVYNTVISYIESNRKNNKQTIHLLKRLPADVLKKTIKN. Residues 172 to 194 form a disordered region; that stretch reads IISNPKESTVNDQNDQTKNNDIT.

Belongs to the pneumoviridae M2-1 protein family. In terms of assembly, homotetramer. The homotetramer interacts with RNA. Interacts with the phosphoprotein (P); this interaction is required for protein M2-1 function, localization in host inclusion bodies. Formation of a complex host PP1/M2-1/P allows P to target host PP1 phosphatase to the M2-1 substrate. Interacts with the nucleoprotein (N). Interacts with the matrix protein (M); this interaction directs M localization to cytoplasmic inclusions comprising viral proteins L, N, P, and M2-1 and mediates M association with the nucleocapsid. Interacts with host RELA. Interacts with host PABPC1 (via C-terminus). In terms of processing, phosphorylated by host in infected cells. Only dephosphorylated M2-1 is competent for viral mRNA binding. Cyclic turnover of phosphorylation-dephosphorylation of M2-1 is required for efficient viral transcription.

The protein localises to the virion. It localises to the host cytoplasm. The protein resides in the host nucleus. Functionally, acts as a tetrameric transcription processivity factor that binds in a competitive manner to RNA and the phosphoprotein (P) to prevent premature termination during transcription. Transcription anti-terminator that enhances readthrough of intergenic junctions during viral transcription. Preferentially binds to poly(A)-rich sequences. Plays a role in the association of the matrix protein with the nucleocapsid, which initiates assembly and budding. Also, can activate host NF-kappa-B through association with host RELA. The chain is Protein M2-1 (M2-1) from Human respiratory syncytial virus B (strain B1).